A 192-amino-acid polypeptide reads, in one-letter code: Imidazoleglycerol-phosphate dehydratase (192 aa).

The protein belongs to the imidazoleglycerol-phosphate dehydratase family.

The protein resides in the cytoplasm. The enzyme catalyses D-erythro-1-(imidazol-4-yl)glycerol 3-phosphate = 3-(imidazol-4-yl)-2-oxopropyl phosphate + H2O. The protein operates within amino-acid biosynthesis; L-histidine biosynthesis; L-histidine from 5-phospho-alpha-D-ribose 1-diphosphate: step 6/9. The sequence is that of Imidazoleglycerol-phosphate dehydratase from Staphylococcus epidermidis (strain ATCC 12228 / FDA PCI 1200).